We begin with the raw amino-acid sequence, 292 residues long: 33 kDa chaperonin (292 aa).

2 disulfide bridges follow: Cys230–Cys232 and Cys263–Cys266.

Belongs to the HSP33 family. Under oxidizing conditions two disulfide bonds are formed involving the reactive cysteines. Under reducing conditions zinc is bound to the reactive cysteines and the protein is inactive.

The protein resides in the cytoplasm. Redox regulated molecular chaperone. Protects both thermally unfolding and oxidatively damaged proteins from irreversible aggregation. Plays an important role in the bacterial defense system toward oxidative stress. The sequence is that of 33 kDa chaperonin from Serratia proteamaculans (strain 568).